The primary structure comprises 160 residues: ATP synthase subunit b (160 aa).

Residues 15-35 traverse the membrane as a helical segment; sequence LAIVIGVLFWFLRGFLGGILE.

Belongs to the ATPase B chain family. In terms of assembly, F-type ATPases have 2 components, F(1) - the catalytic core - and F(0) - the membrane proton channel. F(1) has five subunits: alpha(3), beta(3), gamma(1), delta(1), epsilon(1). F(0) has four main subunits: a(1), b(1), b'(1) and c(10-14). The alpha and beta chains form an alternating ring which encloses part of the gamma chain. F(1) is attached to F(0) by a central stalk formed by the gamma and epsilon chains, while a peripheral stalk is formed by the delta, b and b' chains.

The protein resides in the cellular thylakoid membrane. Functionally, f(1)F(0) ATP synthase produces ATP from ADP in the presence of a proton or sodium gradient. F-type ATPases consist of two structural domains, F(1) containing the extramembraneous catalytic core and F(0) containing the membrane proton channel, linked together by a central stalk and a peripheral stalk. During catalysis, ATP synthesis in the catalytic domain of F(1) is coupled via a rotary mechanism of the central stalk subunits to proton translocation. In terms of biological role, component of the F(0) channel, it forms part of the peripheral stalk, linking F(1) to F(0). The chain is ATP synthase subunit b from Synechococcus sp. (strain CC9902).